Reading from the N-terminus, the 129-residue chain is Tumor necrosis factor receptor superfamily member 12A (129 aa).

A signal peptide spans Met-1–Gly-27. Over Glu-28–Pro-80 the chain is Extracellular. Disulfide bonds link Cys-36-Cys-49, Cys-52-Cys-67, and Cys-55-Cys-64. One copy of the TNFR-Cys; atypical repeat lies at Cys-36–Cys-67. The chain crosses the membrane as a helical span at residues Ile-81–Trp-101. Topologically, residues Arg-102–Gln-129 are cytoplasmic.

Associates with TRAF1 and TRAF2, and probably also with TRAF3. Highly expressed in heart, placenta and kidney. Intermediate expression in lung, skeletal muscle and pancreas.

The protein resides in the membrane. Functionally, receptor for TNFSF12/TWEAK. Weak inducer of apoptosis in some cell types. Promotes angiogenesis and the proliferation of endothelial cells. May modulate cellular adhesion to matrix proteins. This is Tumor necrosis factor receptor superfamily member 12A (TNFRSF12A) from Homo sapiens (Human).